A 326-amino-acid polypeptide reads, in one-letter code: Protease HtpX homolog (326 aa).

2 helical membrane-spanning segments follow: residues 10–30 (LNMALATLGIVLLGFALALAV) and 41–61 (VGLMLSILMFIFFLNIIQWLF). Zn(2+) is bound at residue histidine 147. The active site involves glutamate 148. Histidine 151 is a Zn(2+) binding site. The next 2 membrane-spanning stretches (helical) occupy residues 159-179 (LLMAVGLIPALIYYLGWWIFW) and 197-217 (LLFLIGIAMMAVSFVFQLLVL). Glutamate 224 is a binding site for Zn(2+).

It belongs to the peptidase M48B family. The cofactor is Zn(2+).

The protein resides in the cell membrane. The polypeptide is Protease HtpX homolog (Saccharolobus islandicus (strain Y.N.15.51 / Yellowstone #2) (Sulfolobus islandicus)).